The sequence spans 364 residues: Methylenetetrahydrofolate--tRNA-(uracil-5-)-methyltransferase TrmFO (364 aa).

FAD is bound at residue 11 to 16; sequence GAGLAG. The span at 335 to 352 shows a compositional bias: polar residues; it reads SYLNQPCSSANDPTSSLL. Residues 335 to 364 form a disordered region; that stretch reads SYLNQPCSSANDPTSSLLDRSPAQRDIPLQ.

The protein belongs to the MnmG family. TrmFO subfamily. Requires FAD as cofactor.

It is found in the cytoplasm. It carries out the reaction uridine(54) in tRNA + (6R)-5,10-methylene-5,6,7,8-tetrahydrofolate + NADH + H(+) = 5-methyluridine(54) in tRNA + (6S)-5,6,7,8-tetrahydrofolate + NAD(+). The catalysed reaction is uridine(54) in tRNA + (6R)-5,10-methylene-5,6,7,8-tetrahydrofolate + NADPH + H(+) = 5-methyluridine(54) in tRNA + (6S)-5,6,7,8-tetrahydrofolate + NADP(+). In terms of biological role, catalyzes the folate-dependent formation of 5-methyl-uridine at position 54 (M-5-U54) in all tRNAs. The chain is Methylenetetrahydrofolate--tRNA-(uracil-5-)-methyltransferase TrmFO from Prochlorococcus marinus (strain MIT 9313).